The chain runs to 61 residues: Photosystem II reaction center protein K (61 aa).

A propeptide spanning residues 1–24 (MLNIFSLMYICLNSALYSSSFLFA) is cleaved from the precursor. A helical transmembrane segment spans residues 40–60 (MPVIPVLFFLLAFVWQAAVSF).

Belongs to the PsbK family. As to quaternary structure, PSII is composed of 1 copy each of membrane proteins PsbA, PsbB, PsbC, PsbD, PsbE, PsbF, PsbH, PsbI, PsbJ, PsbK, PsbL, PsbM, PsbT, PsbX, PsbY, PsbZ, Psb30/Ycf12, at least 3 peripheral proteins of the oxygen-evolving complex and a large number of cofactors. It forms dimeric complexes.

It is found in the plastid. Its subcellular location is the chloroplast thylakoid membrane. Functionally, one of the components of the core complex of photosystem II (PSII). PSII is a light-driven water:plastoquinone oxidoreductase that uses light energy to abstract electrons from H(2)O, generating O(2) and a proton gradient subsequently used for ATP formation. It consists of a core antenna complex that captures photons, and an electron transfer chain that converts photonic excitation into a charge separation. This Citrus sinensis (Sweet orange) protein is Photosystem II reaction center protein K.